We begin with the raw amino-acid sequence, 591 residues long: Potassium-transporting ATPase potassium-binding subunit (591 aa).

Transmembrane regions (helical) follow at residues 6-26 (WFQI…LGVF), 63-83 (WTEY…MLYI), 137-157 (GLAY…IAFI), 179-199 (VLWV…SQGV), 272-292 (LSNL…TYTL), 303-323 (WAVW…VYWA), 405-425 (AGMY…GLMV), 444-464 (AMLV…ISSV), 510-530 (VAIG…MLAI), and 553-573 (LFSV…FFPA).

It belongs to the KdpA family. The system is composed of three essential subunits: KdpA, KdpB and KdpC.

The protein localises to the cell inner membrane. In terms of biological role, part of the high-affinity ATP-driven potassium transport (or Kdp) system, which catalyzes the hydrolysis of ATP coupled with the electrogenic transport of potassium into the cytoplasm. This subunit binds the periplasmic potassium ions and delivers the ions to the membrane domain of KdpB through an intramembrane tunnel. The chain is Potassium-transporting ATPase potassium-binding subunit from Koribacter versatilis (strain Ellin345).